A 95-amino-acid polypeptide reads, in one-letter code: Cobalt transport protein CbiN (95 aa).

The next 2 membrane-spanning stretches (helical) occupy residues 5–25 and 67–87; these read HILM…IYSG and LLFA…FGYY.

Belongs to the CbiN family. Forms an energy-coupling factor (ECF) transporter complex composed of an ATP-binding protein (A component, CbiO), a transmembrane protein (T component, CbiQ) and 2 possible substrate-capture proteins (S components, CbiM and CbiN) of unknown stoichimetry.

Its subcellular location is the cell membrane. It participates in cofactor biosynthesis; adenosylcobalamin biosynthesis. In terms of biological role, part of the energy-coupling factor (ECF) transporter complex CbiMNOQ involved in cobalt import. This chain is Cobalt transport protein CbiN, found in Methanothermobacter thermautotrophicus (strain ATCC 29096 / DSM 1053 / JCM 10044 / NBRC 100330 / Delta H) (Methanobacterium thermoautotrophicum).